Here is a 252-residue protein sequence, read N- to C-terminus: Chitooligosaccharide deacetylase (252 aa).

Residues histidine 61 and histidine 125 each coordinate Mg(2+).

This sequence belongs to the YdjC deacetylase family. ChbG subfamily. Homodimer. The cofactor is Mg(2+).

It localises to the cytoplasm. The enzyme catalyses N,N'-diacetylchitobiose + H2O = N-acetyl-beta-D-glucosaminyl-(1-&gt;4)-D-glucosamine + acetate. It catalyses the reaction diacetylchitobiose-6'-phosphate + H2O = N'-monoacetylchitobiose-6'-phosphate + acetate. It participates in glycan degradation; chitin degradation. Functionally, involved in the degradation of chitin. ChbG is essential for growth on the acetylated chitooligosaccharides chitobiose and chitotriose but is dispensable for growth on cellobiose and chitosan dimer, the deacetylated form of chitobiose. Deacetylation of chitobiose-6-P and chitotriose-6-P is necessary for both the activation of the chb promoter by the regulatory protein ChbR and the hydrolysis of phosphorylated beta-glucosides by the phospho-beta-glucosidase ChbF. Catalyzes the removal of only one acetyl group from chitobiose-6-P to yield monoacetylchitobiose-6-P, the inducer of ChbR and the substrate of ChbF. The sequence is that of Chitooligosaccharide deacetylase from Salmonella heidelberg (strain SL476).